The primary structure comprises 200 residues: Small ribosomal subunit protein uS4c (200 aa).

The disordered stretch occupies residues 20-42 (GLTRKTTTRTSRPGQHGTQARKP). Polar residues predominate over residues 23–37 (RKTTTRTSRPGQHGT). The S4 RNA-binding domain occupies 90–152 (MRLDNVIFRL…PKSQSIVKNY (63 aa)).

Belongs to the universal ribosomal protein uS4 family. As to quaternary structure, part of the 30S ribosomal subunit. Contacts protein S5. The interaction surface between S4 and S5 is involved in control of translational fidelity.

The protein resides in the plastid. It localises to the chloroplast. In terms of biological role, one of the primary rRNA binding proteins, it binds directly to 16S rRNA where it nucleates assembly of the body of the 30S subunit. Functionally, with S5 and S12 plays an important role in translational accuracy. This is Small ribosomal subunit protein uS4c (rps4) from Guillardia theta (Cryptophyte).